A 671-amino-acid polypeptide reads, in one-letter code: NADH-quinone oxidoreductase subunit G (671 aa).

The 2Fe-2S ferredoxin-type domain maps to 1 to 78 (MIKLNIDGSE…GMVIHTDTPM (78 aa)). Residues cysteine 34, cysteine 45, cysteine 48, and cysteine 62 each contribute to the [2Fe-2S] cluster site. The 40-residue stretch at 78–117 (MVKKAREGVMEFLLINHPLDCPICDQGGECDLQDQAFRYG) folds into the 4Fe-4S His(Cys)3-ligated-type domain. Residues histidine 94, cysteine 98, cysteine 101, cysteine 107, cysteine 146, cysteine 149, cysteine 152, and cysteine 196 each contribute to the [4Fe-4S] cluster site. The region spanning 215-271 (LKHTASIGVHDAEGSNIRIDSRGDEVMRILPRVNEEINEEWLSDKNRFSYDGLKYQR) is the 4Fe-4S Mo/W bis-MGD-type domain.

This sequence belongs to the complex I 75 kDa subunit family. [2Fe-2S] cluster is required as a cofactor. It depends on [4Fe-4S] cluster as a cofactor.

It carries out the reaction a quinone + NADH + 5 H(+)(in) = a quinol + NAD(+) + 4 H(+)(out). Functionally, NDH-1 shuttles electrons from NADH, via FMN and iron-sulfur (Fe-S) centers, to quinones in the respiratory chain. Couples the redox reaction to proton translocation (for every two electrons transferred, four hydrogen ions are translocated across the cytoplasmic membrane), and thus conserves the redox energy in a proton gradient. In Rickettsia felis (strain ATCC VR-1525 / URRWXCal2) (Rickettsia azadi), this protein is NADH-quinone oxidoreductase subunit G (nuoG).